Consider the following 195-residue polypeptide: Packaging protein 2 (195 aa).

Residues 1–124 (MAPKKKLQLP…QEQQQRQGYR (124 aa)) are disordered. Acidic residues predominate over residues 15–53 (TDEEEYWDSQAEEVLDEEEEMMEDWDSLDEASEAEEVSD). Low complexity predominate over residues 54–63 (ETPSPSVAFP).

Belongs to the adenoviridae splicing factor family. Part of a genome packaging complex composed of packaging proteins 1, 2 and 3; this complex specifically binds to the packaging sequence on the left end of viral genomic DNA and performs packaging of the viral genome. Self-assembles into higher-order structures.

Its subcellular location is the host nucleus. In terms of biological role, component of the packaging machinery which encapsidates the viral DNA into preformed capsids and transcriptional activator of the viral major late promoter (MLP). Binds, along with packaging proteins 1 and 3, to the specific packaging sequence on the left end of viral genomic DNA and plays an active role in packaging of the viral genome into preformed capsids. Specifically binds to the 5'-TTTG-3' nucleotides of the repeats making up the packaging sequence. Forms a transcription factor called DEF-A through cooperative binding with packaging protein 1. DEF-A binds to downstream elements of the major late promoter (MLP) and stimulates transcription from the MLP after initiation of viral DNA replication. Simultaneously suppresses early gene expression and is thus likely to participate in the early-late switch in the expression pattern of the late viral proteins. May as well enhance transcription from IVa2 and pIX promoters. The protein is Packaging protein 2 of Homo sapiens (Human).